The primary structure comprises 689 residues: tRNA 5-methylaminomethyl-2-thiouridine biosynthesis bifunctional protein MnmC (689 aa).

Positions 1–245 (MNQRPIQTAT…KREMLTGTLP (245 aa)) are tRNA (mnm(5)s(2)U34)-methyltransferase. The segment at 270–689 (IGGGIVSALT…RSPATQESSR (420 aa)) is FAD-dependent cmnm(5)s(2)U34 oxidoreductase.

It in the N-terminal section; belongs to the methyltransferase superfamily. tRNA (mnm(5)s(2)U34)-methyltransferase family. The protein in the C-terminal section; belongs to the DAO family. FAD is required as a cofactor.

The protein resides in the cytoplasm. It carries out the reaction 5-aminomethyl-2-thiouridine(34) in tRNA + S-adenosyl-L-methionine = 5-methylaminomethyl-2-thiouridine(34) in tRNA + S-adenosyl-L-homocysteine + H(+). Catalyzes the last two steps in the biosynthesis of 5-methylaminomethyl-2-thiouridine (mnm(5)s(2)U) at the wobble position (U34) in tRNA. Catalyzes the FAD-dependent demodification of cmnm(5)s(2)U34 to nm(5)s(2)U34, followed by the transfer of a methyl group from S-adenosyl-L-methionine to nm(5)s(2)U34, to form mnm(5)s(2)U34. The protein is tRNA 5-methylaminomethyl-2-thiouridine biosynthesis bifunctional protein MnmC of Yersinia pseudotuberculosis serotype O:1b (strain IP 31758).